Consider the following 75-residue polypeptide: Dermaseptin-DA2 (75 aa).

The first 22 residues, 1-22 (MALVKKSLFLVLFLGLVSLSIC), serve as a signal peptide directing secretion. A propeptide spanning residues 23-42 (EEKRENEDEEEQEDDEQSEE) is cleaved from the precursor.

The protein belongs to the frog skin active peptide (FSAP) family. Dermaseptin subfamily. As to expression, expressed by the skin glands.

It is found in the secreted. In terms of biological role, possesses a potent antimicrobial activity against Gram-positive and Gram-negative bacteria. Probably acts by disturbing membrane functions with its amphipathic structure. The chain is Dermaseptin-DA2 from Agalychnis dacnicolor (Giant Mexican leaf frog).